The sequence spans 279 residues: MAARVIDGKAVAAALRAEVAARAATLPYAPGLAVVLVGEDPASQVYVRNKERAAKAAGFASETIRLPASASQAELLALIARLNHDPAVDGILVQLPLPAGIDPQAVIRAIDPAKDVDGFHPDNVAALALGTPFLVPCTPRGVMKLLAAAGIAPRGARALVLGRSNIVGRPMAALLLAADATVTIAHSRTRDLAAECRRAEILIAAVGRAEMVRGDWVSPGATVIDVGINRTAAGGLVGDVAYAEAAAVAGAITPVPGGVGPMTIACLLENTLIAAAARR.

NADP(+) contacts are provided by residues 162–164, serine 187, and isoleucine 228; that span reads GRS.

This sequence belongs to the tetrahydrofolate dehydrogenase/cyclohydrolase family. Homodimer.

The enzyme catalyses (6R)-5,10-methylene-5,6,7,8-tetrahydrofolate + NADP(+) = (6R)-5,10-methenyltetrahydrofolate + NADPH. It catalyses the reaction (6R)-5,10-methenyltetrahydrofolate + H2O = (6R)-10-formyltetrahydrofolate + H(+). It functions in the pathway one-carbon metabolism; tetrahydrofolate interconversion. Catalyzes the oxidation of 5,10-methylenetetrahydrofolate to 5,10-methenyltetrahydrofolate and then the hydrolysis of 5,10-methenyltetrahydrofolate to 10-formyltetrahydrofolate. The chain is Bifunctional protein FolD from Acidiphilium cryptum (strain JF-5).